The primary structure comprises 383 residues: Probable disease resistance protein At4g19060 (383 aa).

The interval 36–84 is disordered; sequence YEKWSSGKQRGSSSKHGNQSTHGDSSPTRNSSGSSKKGRPKANRVETSS. Residues 41–70 show a composition bias toward polar residues; it reads SGKQRGSSSKHGNQSTHGDSSPTRNSSGSS. 2 NB-ARC domains span residues 75–184 and 207–281; these read PKAN…MFKH and VKEK…LAKA. Residue 121 to 128 participates in ATP binding; sequence GKYGVGKT.

Its function is as follows. Possible disease resistance protein. The sequence is that of Probable disease resistance protein At4g19060 from Arabidopsis thaliana (Mouse-ear cress).